The sequence spans 710 residues: Choline transporter-like protein 2 (710 aa).

Over 1-34 (MEDDGKSPPDSAYGEPKKYDPNFKGPIQNRGCTD) the chain is Cytoplasmic. The helical transmembrane segment at 35 to 55 (ILCCILIVLGIIAYVAVGIVA) threads the bilayer. Residues 56–236 (WTYGDPRKVI…KIFEDYTVSW (181 aa)) lie on the Extracellular side of the membrane. N-linked (GlcNAc...) asparagine glycans are attached at residues Asn-147, Asn-190, and Asn-204. Residues 237–257 (YWIIIGLIIAMVISLIFVVLL) traverse the membrane as a helical segment. Residues 258–260 (RFL) lie on the Cytoplasmic side of the membrane. Residues 261–281 (AGIMVWVMIVLVIAVMGYGIF) traverse the membrane as a helical segment. Residues 282 to 319 (HCYMEYARLKGQSGSDVTLKDIGFQTDIRVYLHLRQTW) are Extracellular-facing. A helical membrane pass occupies residues 320 to 340 (LAFMIILCILEVIVILLLIFL). Residues 341–368 (RKRIMIAIALIKEASRAVGFVMSSLVFP) are Cytoplasmic-facing. Residues 369 to 389 (LFTFLLVCLCIAYWAITAVFL) form a helical membrane-spanning segment. The Extracellular segment spans residues 390 to 458 (STSNEAVYKV…FQIYNAFMFL (69 aa)). 3 N-linked (GlcNAc...) asparagine glycosylation sites follow: Asn-401, Asn-418, and Asn-421. Residues 459–481 (WLANFVIALGQVTLAGAFASYYW) traverse the membrane as a helical segment. Residues 482–508 (AFKKPDDMPAFPIFSSLGRALRYHTGS) are Cytoplasmic-facing. A helical membrane pass occupies residues 509–529 (LAFGSLILAIVQMIRILLEYL). Topologically, residues 530 to 567 (DHKLKGADNKCARFLLCCLKCCFWCLEKFIKFLNRNAY) are extracellular. A helical transmembrane segment spans residues 568 to 588 (IMIAIYGTNFCTSARNAFFLL). The Cytoplasmic segment spans residues 589–603 (MRNIIRVAVLDKVTD). The chain crosses the membrane as a helical span at residues 604–624 (FLLFLGKLLVVGCVGILAFFF). The Extracellular segment spans residues 625–642 (FSRRIQIVQDTAPTLNYY). A helical transmembrane segment spans residues 643 to 663 (WVPILTVILGSYLIAHGFFSV). Over 664 to 710 (YGMCVDTLFLCFLEDLERNDGSTERPYFMSGSLQKLLNKSNQTKPDK) the chain is Cytoplasmic.

This sequence belongs to the CTL (choline transporter-like) family.

It is found in the cell membrane. Its subcellular location is the mitochondrion outer membrane. The catalysed reaction is choline(out) + n H(+)(in) = choline(in) + n H(+)(out). It catalyses the reaction ethanolamine(out) + n H(+)(in) = ethanolamine(in) + n H(+)(out). In terms of biological role, choline/H+ antiporter, mainly in mitochodria. Also acts as a low-affinity ethanolamine/H+ antiporter, regulating the supply of extracellular ethanolamine (Etn) for the CDP-Etn pathway, redistribute intracellular Etn and balance the CDP-Cho and CDP-Etn arms of the Kennedy pathway. The protein is Choline transporter-like protein 2 (slc44a2) of Xenopus laevis (African clawed frog).